The following is a 214-amino-acid chain: GTP-binding nuclear protein Ran (214 aa).

The Small GTPase Ran-type domain occupies 6 to 170; that stretch reads YIPQYKLILV…LWLARRLSNQ (165 aa). A GTP-binding site is contributed by 17-24; that stretch reads DGGVGKTT. The segment at 36-44 is switch-I; sequence KKYIPTLGV. GTP contacts are provided by residues G67, 121-124, and 149-151; these read NKVD and SAR. The tract at residues 67-83 is switch-II; the sequence is GQEKFGGLRDGYYIKSD.

It belongs to the small GTPase superfamily. Ran family. Found in a nuclear export complex with RanGTP, exportin and pre-miRNA.

It localises to the nucleus. GTP-binding protein involved in nucleocytoplasmic transport. Required for the import of protein into the nucleus and also for RNA export. Involved in chromatin condensation and control of cell cycle. The polypeptide is GTP-binding nuclear protein Ran (Plasmodium falciparum).